Reading from the N-terminus, the 244-residue chain is Lactate utilization protein A (244 aa).

This sequence belongs to the LutA/YkgE family.

Is involved in L-lactate degradation and allows cells to grow with lactate as the sole carbon source. The polypeptide is Lactate utilization protein A (Halalkalibacterium halodurans (strain ATCC BAA-125 / DSM 18197 / FERM 7344 / JCM 9153 / C-125) (Bacillus halodurans)).